A 500-amino-acid polypeptide reads, in one-letter code: Probable malate:quinone oxidoreductase (500 aa).

Belongs to the MQO family. Requires FAD as cofactor.

It catalyses the reaction (S)-malate + a quinone = a quinol + oxaloacetate. It participates in carbohydrate metabolism; tricarboxylic acid cycle; oxaloacetate from (S)-malate (quinone route): step 1/1. The protein is Probable malate:quinone oxidoreductase of Bordetella avium (strain 197N).